The primary structure comprises 397 residues: Subtilisin-like serine protease Pen c 1 (397 aa).

The first 19 residues, methionine 1–alanine 19, serve as a signal peptide directing secretion. The propeptide at glycine 20–threonine 115 is removed in mature form. One can recognise an Inhibitor I9 domain in the interval serine 35–asparagine 113. One can recognise a Peptidase S8 domain in the interval serine 125 to valine 397. Residues aspartate 157, histidine 188, and serine 343 each act as charge relay system in the active site.

The protein belongs to the peptidase S8 family.

The protein resides in the secreted. With respect to regulation, inhibited by 0.1 mM diisopropyl fluorophosphate (DFP), phenylmethanesulfonyl fluoride (PMSF), chymostatin and elastatinal. Not inhibited by N-alpha-p-tosyl-L-lysine chloromethylketone (TLCK), N-tosyl-L-phenylalanyl chloromethyl ketone (TPCK) or N-carbobenzoxy-L-phenylalanine chloromethylketone (ZPCK). In terms of biological role, serine protease. Hydrolyzes azocasein. Cleaves peptide bonds of the oxidized insulin B chain preferably at 15-Leu-|-Tyr-16, but also at 4-Gln-|-His-5 and 24-Phe-|-Phe-25, and to a lesser extent at 5-His-|-Leu-6 and 25-Phe-|-Tyr-26. Hydrolyzes amide bonds between amino acids and 7-amino-4-methylcoumarin (AMC) in vitro. The chain is Subtilisin-like serine protease Pen c 1 from Penicillium citrinum.